The chain runs to 448 residues: 3-phosphoshikimate 1-carboxyvinyltransferase (448 aa).

3-phosphoshikimate is bound by residues Lys38, Ser39, and Arg43. Lys38 is a binding site for phosphoenolpyruvate. Residues Gly111 and Arg140 each contribute to the phosphoenolpyruvate site. 4 residues coordinate 3-phosphoshikimate: Ser185, Gln187, Asp335, and Lys362. Position 187 (Gln187) interacts with phosphoenolpyruvate. The active-site Proton acceptor is the Asp335. 2 residues coordinate phosphoenolpyruvate: Arg366 and Arg408.

This sequence belongs to the EPSP synthase family. As to quaternary structure, monomer.

The protein localises to the cytoplasm. It catalyses the reaction 3-phosphoshikimate + phosphoenolpyruvate = 5-O-(1-carboxyvinyl)-3-phosphoshikimate + phosphate. It functions in the pathway metabolic intermediate biosynthesis; chorismate biosynthesis; chorismate from D-erythrose 4-phosphate and phosphoenolpyruvate: step 6/7. In terms of biological role, catalyzes the transfer of the enolpyruvyl moiety of phosphoenolpyruvate (PEP) to the 5-hydroxyl of shikimate-3-phosphate (S3P) to produce enolpyruvyl shikimate-3-phosphate and inorganic phosphate. This Gloeothece citriformis (strain PCC 7424) (Cyanothece sp. (strain PCC 7424)) protein is 3-phosphoshikimate 1-carboxyvinyltransferase.